The primary structure comprises 119 residues: Large ribosomal subunit protein bL20 (119 aa).

It belongs to the bacterial ribosomal protein bL20 family.

Functionally, binds directly to 23S ribosomal RNA and is necessary for the in vitro assembly process of the 50S ribosomal subunit. It is not involved in the protein synthesizing functions of that subunit. This Streptococcus pneumoniae serotype 2 (strain D39 / NCTC 7466) protein is Large ribosomal subunit protein bL20.